The following is a 277-amino-acid chain: Ras suppressor protein 1 (277 aa).

The tract at residues 1-23 (MSKSLKKLVEESREKNQPEVDMS) is disordered. An N-acetylserine modification is found at Ser2. The segment covering 7-23 (KLVEESREKNQPEVDMS) has biased composition (basic and acidic residues). 7 LRR repeats span residues 41–63 (HITQ…AELK), 64–85 (NLEV…ISSL), 87–108 (KLKH…FGSS), 110–133 (LLEV…FFYL), 135–156 (TLRA…IGKL), 158–179 (KLQI…IGEL), and 181–202 (QLKE…LGNL). The interval 250–277 (MQANPEPPKKNNDKSKKISRKPLAAKNK) is disordered. Basic and acidic residues predominate over residues 256–265 (PPKKNNDKSK).

Functionally, potentially plays a role in the Ras signal transduction pathway. Capable of suppressing v-Ras transformation in vitro. This chain is Ras suppressor protein 1 (Rsu1), found in Mus musculus (Mouse).